Consider the following 119-residue polypeptide: Protein TusC (119 aa).

This sequence belongs to the DsrF/TusC family. In terms of assembly, heterohexamer, formed by a dimer of trimers. The hexameric TusBCD complex contains 2 copies each of TusB, TusC and TusD. The TusBCD complex interacts with TusE.

It localises to the cytoplasm. Part of a sulfur-relay system required for 2-thiolation of 5-methylaminomethyl-2-thiouridine (mnm(5)s(2)U) at tRNA wobble positions. This Buchnera aphidicola subsp. Acyrthosiphon pisum (strain APS) (Acyrthosiphon pisum symbiotic bacterium) protein is Protein TusC.